The primary structure comprises 1370 residues: DNA-directed RNA polymerase subunit beta (1370 aa).

This sequence belongs to the RNA polymerase beta chain family. In terms of assembly, the RNAP catalytic core consists of 2 alpha, 1 beta, 1 beta' and 1 omega subunit. When a sigma factor is associated with the core the holoenzyme is formed, which can initiate transcription.

It catalyses the reaction RNA(n) + a ribonucleoside 5'-triphosphate = RNA(n+1) + diphosphate. DNA-dependent RNA polymerase catalyzes the transcription of DNA into RNA using the four ribonucleoside triphosphates as substrates. In Geotalea daltonii (strain DSM 22248 / JCM 15807 / FRC-32) (Geobacter daltonii), this protein is DNA-directed RNA polymerase subunit beta.